The following is a 458-amino-acid chain: tRNA modification GTPase MnmE (458 aa).

The (6S)-5-formyl-5,6,7,8-tetrahydrofolate site is built by Arg22, Glu84, and Arg123. The TrmE-type G domain occupies 220–379 (GIATAIIGRP…LEKAIADLFF (160 aa)). Asn230 provides a ligand contact to K(+). GTP is bound by residues 230-235 (NVGKSS), 249-255 (TDIAGTT), and 274-277 (DTAG). Mg(2+) is bound at residue Ser234. Residues Thr249, Ile251, and Thr254 each contribute to the K(+) site. Residue Thr255 participates in Mg(2+) binding. Lys458 provides a ligand contact to (6S)-5-formyl-5,6,7,8-tetrahydrofolate.

It belongs to the TRAFAC class TrmE-Era-EngA-EngB-Septin-like GTPase superfamily. TrmE GTPase family. In terms of assembly, homodimer. Heterotetramer of two MnmE and two MnmG subunits. Requires K(+) as cofactor.

The protein resides in the cytoplasm. Exhibits a very high intrinsic GTPase hydrolysis rate. Involved in the addition of a carboxymethylaminomethyl (cmnm) group at the wobble position (U34) of certain tRNAs, forming tRNA-cmnm(5)s(2)U34. In Bacillus cytotoxicus (strain DSM 22905 / CIP 110041 / 391-98 / NVH 391-98), this protein is tRNA modification GTPase MnmE.